The following is a 224-amino-acid chain: Deoxyribose-phosphate aldolase (224 aa).

The active-site Proton donor/acceptor is Asp92. The active-site Schiff-base intermediate with acetaldehyde is the Lys154. The active-site Proton donor/acceptor is the Lys183.

This sequence belongs to the DeoC/FbaB aldolase family. DeoC type 1 subfamily.

It is found in the cytoplasm. It catalyses the reaction 2-deoxy-D-ribose 5-phosphate = D-glyceraldehyde 3-phosphate + acetaldehyde. It participates in carbohydrate degradation; 2-deoxy-D-ribose 1-phosphate degradation; D-glyceraldehyde 3-phosphate and acetaldehyde from 2-deoxy-alpha-D-ribose 1-phosphate: step 2/2. Its function is as follows. Catalyzes a reversible aldol reaction between acetaldehyde and D-glyceraldehyde 3-phosphate to generate 2-deoxy-D-ribose 5-phosphate. The polypeptide is Deoxyribose-phosphate aldolase (Mannheimia succiniciproducens (strain KCTC 0769BP / MBEL55E)).